The sequence spans 235 residues: Probable GTP-binding protein EngB (235 aa).

The EngB-type G domain maps to 23-219 (QVPEIAFAGR…NDKIIELLGL (197 aa)). Residues 31-38 (GRSNAGKS), 58-62 (GRTQH), 92-95 (DLPG), 159-162 (TKSD), and 193-200 (FTAQMFSA) contribute to the GTP site. Mg(2+) contacts are provided by Ser-38 and Thr-60.

Belongs to the TRAFAC class TrmE-Era-EngA-EngB-Septin-like GTPase superfamily. EngB GTPase family. The cofactor is Mg(2+).

Functionally, necessary for normal cell division and for the maintenance of normal septation. The protein is Probable GTP-binding protein EngB of Janthinobacterium sp. (strain Marseille) (Minibacterium massiliensis).